The chain runs to 75 residues: Penaeidin-3k (75 aa).

A signal peptide spans 1–19 (MRLVVCLVFLASFALVCQG). Gln20 is modified (pyrrolidone carboxylic acid). Cystine bridges form between Cys44-Cys59, Cys48-Cys66, and Cys60-Cys67. Ser74 is modified (serine amide).

Belongs to the penaeidin family.

The protein localises to the cytoplasmic granule. Antibacterial and antifungal activity. Presents chitin-binding activity. In Penaeus setiferus (Atlantic white shrimp), this protein is Penaeidin-3k.